The sequence spans 78 residues: Acyl carrier protein BQ2027_MB0103 (78 aa).

Residues Met1–Gly78 enclose the Carrier domain. Ser35 is subject to O-(pantetheine 4'-phosphoryl)serine.

The protein belongs to the acyl carrier protein (ACP) family. The cofactor is pantetheine 4'-phosphate.

The protein operates within lipid metabolism; fatty acid metabolism. In terms of biological role, acyl-carrier protein (ACP) involved in the biosynthesis of a unique class of isonitrile lipopeptides (INLPs) that seem to play a role in metal acquisition. Is the dedicated ACP for the loading of activated acyl groups catalyzed by FadD10. The polypeptide is Acyl carrier protein BQ2027_MB0103 (Mycobacterium bovis (strain ATCC BAA-935 / AF2122/97)).